The primary structure comprises 873 residues: Bifunctional uridylyltransferase/uridylyl-removing enzyme (873 aa).

Positions methionine 1 to isoleucine 332 are uridylyltransferase. The tract at residues isoleucine 333–threonine 692 is uridylyl-removing. The 123-residue stretch at valine 451–leucine 573 folds into the HD domain. ACT domains follow at residues glutamate 693 to arginine 773 and leucine 800 to proline 873.

Belongs to the GlnD family. The cofactor is Mg(2+).

It catalyses the reaction [protein-PII]-L-tyrosine + UTP = [protein-PII]-uridylyl-L-tyrosine + diphosphate. It carries out the reaction [protein-PII]-uridylyl-L-tyrosine + H2O = [protein-PII]-L-tyrosine + UMP + H(+). Uridylyltransferase (UTase) activity is inhibited by glutamine, while glutamine activates uridylyl-removing (UR) activity. Its function is as follows. Modifies, by uridylylation and deuridylylation, the PII regulatory proteins (GlnB and homologs), in response to the nitrogen status of the cell that GlnD senses through the glutamine level. Under low glutamine levels, catalyzes the conversion of the PII proteins and UTP to PII-UMP and PPi, while under higher glutamine levels, GlnD hydrolyzes PII-UMP to PII and UMP (deuridylylation). Thus, controls uridylylation state and activity of the PII proteins, and plays an important role in the regulation of nitrogen assimilation and metabolism. The sequence is that of Bifunctional uridylyltransferase/uridylyl-removing enzyme from Vibrio vulnificus (strain CMCP6).